Reading from the N-terminus, the 461-residue chain is MSFFFSRQSDISFLLFSESTSTTRNSSQARLLSRLAVDGSKGRAMPVLNTTRATAAASGVDATLTIRDGPVFHGTAFGANSNISGEAVFTTSLVGYPESMTDPSYRGQILVFTQPLIGNYGVPSNQRDEYGLLKYFESPHIQCAGVVVADVAEKYSHWTAVESLSEWCAREGVPVISGVDTRAIVTHLREQGSSLARISIGDEYDADEDEGFIDPGAINLVKRVSTKAPFVVSNPNATFHVALIDCGVKENILRSLVSRGASVTVFPYNYPIHKVADNFDGVFISNGPGDPTHCQETVYNLGRLMETSSVPIMGICLGHQLLALAVGAQTIKLKYGNRAHNIPALDLTTGQCHITSQNHGYAVDASTLPSEFKEYFVNLNDGSNEGMMHKTRPIFSTQFHPEAKGGPMDSSYLFDKYLENVQMYKDNSKVYRDNRPSQLMIDILSKERVGVEPSPLAANAI.

One can recognise a Glutamine amidotransferase type-1 domain in the interval 240–427 (HVALIDCGVK…LENVQMYKDN (188 aa)). The active-site Nucleophile is Cys316. Residues His400 and Glu402 contribute to the active site.

This sequence belongs to the CarA family. Heterodimer composed of 2 chains; the small (or glutamine) chain promotes the hydrolysis of glutamine to ammonia, which is used by the large (or ammonia) chain to synthesize carbamoyl phosphate.

The protein localises to the cytoplasm. The enzyme catalyses hydrogencarbonate + L-glutamine + 2 ATP + H2O = carbamoyl phosphate + L-glutamate + 2 ADP + phosphate + 2 H(+). It carries out the reaction L-glutamine + H2O = L-glutamate + NH4(+). Its pathway is amino-acid biosynthesis; L-arginine biosynthesis; carbamoyl phosphate from bicarbonate: step 1/1. Small subunit of the arginine-specific carbamoyl phosphate synthase (CPSase). CPSase catalyzes the formation of carbamoyl phosphate from the ammonia moiety of glutamine, carbonate, and phosphate donated by ATP, constituting the first step of 2 biosynthetic pathways, one leading to arginine and/or urea and the other to pyrimidine nucleotides. The small subunit (glutamine amidotransferase) binds and cleaves glutamine to supply the large subunit with the substrate ammonia. This Chaetomium globosum (strain ATCC 6205 / CBS 148.51 / DSM 1962 / NBRC 6347 / NRRL 1970) (Soil fungus) protein is Carbamoyl phosphate synthase arginine-specific small chain (CPA1).